Reading from the N-terminus, the 337-residue chain is Large ribosomal subunit protein uL3 (337 aa).

A disordered region spans residues 1 to 20 (MASIHRPKRGSLAFSPRKRA).

The protein belongs to the universal ribosomal protein uL3 family. Part of the 50S ribosomal subunit. Forms a cluster with proteins L14 and L24e.

Its function is as follows. One of the primary rRNA binding proteins, it binds directly near the 3'-end of the 23S rRNA, where it nucleates assembly of the 50S subunit. The sequence is that of Large ribosomal subunit protein uL3 from Methanosarcina acetivorans (strain ATCC 35395 / DSM 2834 / JCM 12185 / C2A).